We begin with the raw amino-acid sequence, 344 residues long: 4-dimethylallyltryptophan N-methyltransferase easF (344 aa).

Belongs to the methyltransferase superfamily. In terms of assembly, homodimer.

The catalysed reaction is 4-(3-methylbut-2-enyl)-L-tryptophan + S-adenosyl-L-methionine = 4-(3-methylbut-2-enyl)-L-abrine + S-adenosyl-L-homocysteine + H(+). It functions in the pathway alkaloid biosynthesis; ergot alkaloid biosynthesis. Its function is as follows. 4-dimethylallyltryptophan N-methyltransferase; part of the gene cluster that mediates the biosynthesis of fungal ergot alkaloid ergovaline, the predominant ergopeptine product in E.festucae var. lolii. DmaW catalyzes the first step of ergot alkaloid biosynthesis by condensing dimethylallyl diphosphate (DMAP) and tryptophan to form 4-dimethylallyl-L-tryptophan. The second step is catalyzed by the methyltransferase easF that methylates 4-dimethylallyl-L-tryptophan in the presence of S-adenosyl-L-methionine, resulting in the formation of 4-dimethylallyl-L-abrine. The catalase easC and the FAD-dependent oxidoreductase easE then transform 4-dimethylallyl-L-abrine to chanoclavine-I which is further oxidized by easD in the presence of NAD(+), resulting in the formation of chanoclavine-I aldehyde. Agroclavine dehydrogenase easG then mediates the conversion of chanoclavine-I aldehyde to agroclavine via a non-enzymatic adduct reaction: the substrate is an iminium intermediate that is formed spontaneously from chanoclavine-I aldehyde in the presence of glutathione. The presence of easA is not required to complete this reaction. Further conversion of agroclavine to paspalic acid is a two-step process involving oxidation of agroclavine to elymoclavine and of elymoclavine to paspalic acid, the second step being performed by the elymoclavine oxidase cloA. Paspalic acid is then further converted to D-lysergic acid. Ergovaline is assembled from D-lysergic acid and three different amino acids by the D-lysergyl-peptide-synthetase composed of a monomudular (lpsB) and a trimodular (lpsA) nonribosomal peptide synthetase subunit. In Epichloe festucae var. lolii (Neotyphodium lolii), this protein is 4-dimethylallyltryptophan N-methyltransferase easF.